A 1988-amino-acid chain; its full sequence is Sodium channel protein type 9 subunit alpha (1988 aa).

Topologically, residues 1-125 are cytoplasmic; it reads MAMLPPPGPQ…RRISIKILVH (125 aa). Positions 26 to 39 are enriched in basic and acidic residues; sequence RIAERKSKEPKEEK. Residues 26–55 form a disordered region; the sequence is RIAERKSKEPKEEKKDDDEEAPKPSSDLEA. Residues 112 to 410 form an I repeat; the sequence is FSPLRRISIK…VAMAYEEQNQ (299 aa). Residues 126–145 form a helical membrane-spanning segment; that stretch reads SLFSMLIMCTILTNCIFMTM. The Extracellular portion of the chain corresponds to 146–150; sequence NNPPD. Residues 151–172 form a helical membrane-spanning segment; that stretch reads WTKNVEYTFTGIYTFESLVKIL. Residues 173 to 185 lie on the Cytoplasmic side of the membrane; sequence ARGFCVGEFTFLR. Residues 186–204 form a helical membrane-spanning segment; the sequence is DPWNWLDFVVIVFAYLTEF. Over 205–210 the chain is Extracellular; sequence VNLGNV. Asn209 carries an N-linked (GlcNAc...) asparagine glycan. Residues 211 to 227 form a helical membrane-spanning segment; the sequence is SALRTFRVLRALKTISV. Topologically, residues 228 to 241 are cytoplasmic; sequence IPGLKTIVGALIQS. Residues 242–267 form a helical membrane-spanning segment; sequence VKKLSDVMILTVFCLSVFALIGLQLF. At 268–346 the chain is on the extracellular side; the sequence is MGNLKHKCFR…PDYGYTSFDT (79 aa). Cys275 and Cys324 are oxidised to a cystine. The N-linked (GlcNAc...) asparagine glycan is linked to Asn283. Residues 347-363 constitute an intramembrane region (pore-forming); sequence FSWAFLALFRLMTQDYW. The Extracellular portion of the chain corresponds to 364 to 376; the sequence is ENLYQQTLRAAGK. Residues 377 to 402 traverse the membrane as a helical segment; it reads TYMIFFVVVIFLGSFYLINLILAVVA. Over 403 to 745 the chain is Cytoplasmic; sequence MAYEEQNQAN…CIYFIVMDPF (343 aa). Low complexity predominate over residues 461–471; that stretch reads SSSETSKLSSK. 2 disordered regions span residues 461 to 543 and 565 to 611; these read SSSE…RGSL and GSET…SPPM. The segment covering 474–486 has biased composition (basic residues); sequence KERRNRRKKKNQK. 2 stretches are compositionally biased toward basic and acidic residues: residues 489-510 and 573-585; these read SSGE…DSIR and DEHS…ESRR. The stretch at 726–989 is one II repeat; it reads CSPYWIKFKK…EEDPDANNLQ (264 aa). A helical transmembrane segment spans residues 746–762; it reads VDLAITICIVLNTLFMA. At 763–771 the chain is on the extracellular side; that stretch reads MEHHPMTEE. The chain crosses the membrane as a helical span at residues 772–796; it reads FKNVLAIGNLVFTGIFAAEMVLKLI. At 797 to 805 the chain is on the cytoplasmic side; the sequence is AMDPYEYFQ. A helical membrane pass occupies residues 806–822; it reads VGWNIFDSLIVTLSLVE. The Extracellular segment spans residues 823–831; it reads LFLADVEGL. The chain crosses the membrane as a helical span at residues 832 to 848; that stretch reads SVLRSFRLLRVFKLAKS. At 849–865 the chain is on the cytoplasmic side; that stretch reads WPTLNMLIKIIGNSVGA. The helical transmembrane segment at 866-888 threads the bilayer; the sequence is LGNLTLVLAIIVFIFAVVGMQLF. Residues 889 to 915 are Extracellular-facing; the sequence is GKSYKECVCKINDDCTLPRWHMNDFFH. Cys897 and Cys903 form a disulfide bridge. The segment at residues 916 to 928 is an intramembrane region (pore-forming); that stretch reads SFLIVFRVLCGEW. Residues 929–940 are Extracellular-facing; it reads IETMWDCMEVAG. An intrachain disulfide couples Cys935 to Cys944. A helical transmembrane segment spans residues 941–967; it reads QAMCLIVYMMVMVIGNLVVLNLFLALL. Residues 968–1187 lie on the Cytoplasmic side of the membrane; that stretch reads LSSFSSDNLT…WWNIRKTCYK (220 aa). A disordered region spans residues 1102 to 1148; it reads NAEELSSDSDSEYSKVRLNRSSSSECSTVDNPLPGEGEEAEAEPMNS. The span at 1120 to 1131 shows a compositional bias: polar residues; that stretch reads NRSSSSECSTVD. The segment covering 1137-1148 has biased composition (acidic residues); sequence EGEEAEAEPMNS. Residues 1180–1488 form an III repeat; that stretch reads NIRKTCYKIV…KKYYNAMKKL (309 aa). A helical transmembrane segment spans residues 1188 to 1212; it reads IVEHSWFESFIVLMILLSSGALAFE. Topologically, residues 1213-1224 are extracellular; the sequence is DIYIERKKTIKI. A helical transmembrane segment spans residues 1225–1250; it reads ILEYADKIFTYIFILEMLLKWIAYGY. The Cytoplasmic portion of the chain corresponds to 1251-1252; it reads KT. Residues 1253 to 1278 form a helical membrane-spanning segment; it reads YFTNAWCWLDFLIVDVSLVTLVANTL. Over 1279-1287 the chain is Extracellular; that stretch reads GYSDLGPIK. The helical transmembrane segment at 1288–1304 threads the bilayer; that stretch reads SLRTLRALRPLRALSRF. The Cytoplasmic segment spans residues 1305 to 1317; it reads EGMRVVVNALIGA. A helical membrane pass occupies residues 1318–1342; the sequence is IPSIMNVLLVCLIFWLIFSIMGVNL. The Extracellular segment spans residues 1343–1394; the sequence is FAGKFYECINTTDGSRFPASQVPNRSECFALMNVSQNVRWKNLKVNFDNVGL. Cys1350 and Cys1370 are joined by a disulfide. N-linked (GlcNAc...) asparagine glycans are attached at residues Asn1352, Asn1366, and Asn1375. An intramembrane region (pore-forming) is located at residues 1395–1405; sequence GYLSLLQVATF. Over 1406 to 1431 the chain is Extracellular; the sequence is KGWTIIMYAAVDSVNVDKQPKYEYSL. A helical transmembrane segment spans residues 1432–1457; it reads YMYIYFVVFIIFGSFFTLNLFIGVII. Topologically, residues 1458 to 1514 are cytoplasmic; that stretch reads DNFNQQKKKLGGQDIFMTEEQKKYYNAMKKLGSKKPQKPIPRPGNKIQGCIFDLVTN. Residue Ser1490 is modified to Phosphoserine; by PKC. Residues 1497-1795 form an IV repeat; sequence IPRPGNKIQG…WEKFDPDATQ (299 aa). Residues 1515–1534 form a helical membrane-spanning segment; it reads QAFDISIMVLICLNMVTMMV. Over 1535 to 1545 the chain is Extracellular; it reads EKEGQSQHMTE. The helical transmembrane segment at 1546-1567 threads the bilayer; that stretch reads VLYWINVVFIILFTGECVLKLI. Residues 1568 to 1576 lie on the Cytoplasmic side of the membrane; that stretch reads SLRHYYFTV. The helical transmembrane segment at 1577 to 1598 threads the bilayer; that stretch reads GWNIFDFVVVIISIVGMFLADL. Topologically, residues 1599-1607 are extracellular; sequence IETYFVSPT. A helical transmembrane segment spans residues 1608-1627; that stretch reads LFRVIRLARIGRILRLVKGA. Residues 1628–1640 lie on the Cytoplasmic side of the membrane; it reads KGIRTLLFALMMS. Residues 1641-1663 form a helical membrane-spanning segment; the sequence is LPALFNIGLLLFLVMFIYAIFGM. Residues 1664–1686 are Extracellular-facing; the sequence is SNFAYVKKEDGINDMFNFETFGN. The segment at residues 1687 to 1699 is an intramembrane region (pore-forming); the sequence is SMICLFQITTSAG. At 1700-1733 the chain is on the extracellular side; sequence WDGLLAPILNSKPPDCDPKKVHPGSSVEGDCGNP. Cys1715 and Cys1730 are oxidised to a cystine. A helical transmembrane segment spans residues 1734 to 1759; the sequence is SVGIFYFVSYIIISFLVVVNMYIAVI. Residues 1760–1988 are Cytoplasmic-facing; the sequence is LENFSVATEE…KGKDSKESKK (229 aa). Residues 1889–1918 enclose the IQ domain; sequence EDVSATVIQRAYRRYRLRQNVKNISSIYIK. Positions 1934-1988 are disordered; it reads FDNVNENSSPEKTDATSSTTSPPSYDSVTKPDKEKYEQDRTEKEDKGKDSKESKK. Residues 1948–1961 show a composition bias toward low complexity; that stretch reads ATSSTTSPPSYDSV. Basic and acidic residues predominate over residues 1962-1988; it reads TKPDKEKYEQDRTEKEDKGKDSKESKK.

Belongs to the sodium channel (TC 1.A.1.10) family. Nav1.7/SCN9A subfamily. The Nav1.7 voltage-gated sodium channel consists of an ion-conducting alpha subunit SCN9A which is functional on its own regulated by one or more beta-1 (SCN1B), beta-2 (SCN2B), beta-3 (SCN3B) and beta-4 (SCN4B) subunits. SCN1B and SCN3B are non-covalently associated with SCN9A. SCN2B and SCN4B are disulfide-linked to SCN9A. SCN1B regulates channel inactivation. Interacts with NEDD4 and NEDD4L; regulates Nav1.7 activity most probably through ubiquitination and subsequent endocytosis. Interacts with TMEM233; modulates the gating properties of NaV1.7. In terms of processing, phosphorylation at Ser-1490 by PKC in a highly conserved cytoplasmic loop increases peak sodium currents. Ubiquitinated by NEDD4L; which may promote its endocytosis. In terms of tissue distribution, expressed strongly in dorsal root ganglion, with only minor levels elsewhere in the body, smooth muscle cells, MTC cell line and C-cell carcinoma. Also expressed in vagus nerves within the head and neck region. Isoform 1 is expressed preferentially in the central and peripheral nervous system. Isoform 2 is expressed preferentially in the dorsal root ganglion.

Its subcellular location is the cell membrane. It is found in the cell projection. The protein localises to the neuron projection. The protein resides in the axon. It catalyses the reaction Na(+)(in) = Na(+)(out). With respect to regulation, inhibited by tetrodotoxin. Weakly inhibited by saxitoxin. Inhibited by the spider huwentoxin-IV that binds the extracellular loop S3-S4 of repeat II. Inhibited by the spider protoxin-II that binds the extracellular loop S3-S4 of repeats II and IV. Inhibited by the scorpion alpha-toxins CvIV4 and AaH2. Inhibited by the conotoxin GVIIJ. Inhibited by the spider beta/delta-theraphotoxin-Pre1a. Functionally, pore-forming subunit of Nav1.7, a voltage-gated sodium (Nav) channel that directly mediates the depolarizing phase of action potentials in excitable membranes. Navs, also called VGSCs (voltage-gated sodium channels) or VDSCs (voltage-dependent sodium channels), operate by switching between closed and open conformations depending on the voltage difference across the membrane. In the open conformation they allow Na(+) ions to selectively pass through the pore, along their electrochemical gradient. The influx of Na(+) ions provokes membrane depolarization, initiating the propagation of electrical signals throughout cells and tissues. Nav1.7 plays a crucial role in controlling the excitability and action potential propagation from nociceptor neurons, thereby contributing to the sensory perception of pain. This Homo sapiens (Human) protein is Sodium channel protein type 9 subunit alpha.